The following is a 269-amino-acid chain: uncharacterized protein (269 aa).

Transmembrane regions (helical) follow at residues 65–85 (FSLF…LFVM), 156–176 (VTSV…ISMV), 182–202 (YTRI…WLGF), 206–226 (MMSF…NDFW), and 242–262 (TLSA…EFSF). Positions 266–269 (KKKW) match the Di-lysine motif motif.

This sequence belongs to the SURF4 family.

It is found in the membrane. This is an uncharacterized protein from Caenorhabditis elegans.